The sequence spans 660 residues: MKAVIFAYHDMGCQGVQAVLDAGYEIAAIFTHADNPAENTFFGSVSRLAAGLGIPVYAPDNVNHPIWVDRIAELAPDIIFSFYYRNLLSEEILHLAPAGAFNLHGSLLPAYRGRAPLNWVLVNGESETGVTLHRMVKRADAGEIVASQRVAIAQDDVALTLHHKLCQAARQLLNSILPTMKCGDIPSVPQRESDATYYGRRRPEDGLIDWHKPVSTVHNLVRAVAAPWPGAFSYNGSQKFTIWSSRICPDAQGVLPGSVISVSPLRVACADGALEIITGQAGDGITVQGSQLAQTLGLVAGARLNRPPATSGKRRIRVLILGVNGFIGNHLTERLLNEENYEVYGMDIGSNAISRFLLHPRFHFVEGDISIHSEWIEYHVKKCDVVLPLVAIATPIEYTRNPLRVFELDFEENLRIIRYCVKYRKRVVFPSTSEVYGMCTDASFDEDKSNLIVGPVNKPRWIYSVSKQLLDRVIWAYGEKEGLRFTLFRPFNWMGPRLDSLNAARIGSSRAITQLILNLVEGTPIKLIDGGQQKRCFTDIRDGIEALFRIIVNEGDRCDGKIINIGNPDNEASIQELATLLLDSFDKHPLRCHFPPFAGFQVVESRSYYGKGYQDVAHRKPSIDNARRCLGWEPSIAMRDTVEETLDFFLRSVDVAERAS.

Residues 1-304 (MKAVIFAYHD…TLGLVAGARL (304 aa)) are formyltransferase ArnAFT. His104 (proton donor; for formyltransferase activity) is an active-site residue. (6R)-10-formyltetrahydrofolate-binding positions include Arg114 and 136 to 140 (VKRAD). The tract at residues 314 to 660 (RRIRVLILGV…RSVDVAERAS (347 aa)) is dehydrogenase ArnADH. Residues Asp347 and 368-369 (DI) contribute to the NAD(+) site. UDP-alpha-D-glucuronate is bound by residues Ala393, Tyr398, and 432–433 (TS). The Proton acceptor; for decarboxylase activity role is filled by Glu434. UDP-alpha-D-glucuronate contacts are provided by residues Arg460, Asn492, 526-535 (KLIDGGQQKR), and Tyr613. The active-site Proton donor; for decarboxylase activity is the Arg619.

This sequence in the N-terminal section; belongs to the Fmt family. UDP-L-Ara4N formyltransferase subfamily. The protein in the C-terminal section; belongs to the NAD(P)-dependent epimerase/dehydratase family. UDP-glucuronic acid decarboxylase subfamily. In terms of assembly, homohexamer, formed by a dimer of trimers.

The catalysed reaction is UDP-alpha-D-glucuronate + NAD(+) = UDP-beta-L-threo-pentopyranos-4-ulose + CO2 + NADH. It carries out the reaction UDP-4-amino-4-deoxy-beta-L-arabinose + (6R)-10-formyltetrahydrofolate = UDP-4-deoxy-4-formamido-beta-L-arabinose + (6S)-5,6,7,8-tetrahydrofolate + H(+). The protein operates within nucleotide-sugar biosynthesis; UDP-4-deoxy-4-formamido-beta-L-arabinose biosynthesis; UDP-4-deoxy-4-formamido-beta-L-arabinose from UDP-alpha-D-glucuronate: step 1/3. It participates in nucleotide-sugar biosynthesis; UDP-4-deoxy-4-formamido-beta-L-arabinose biosynthesis; UDP-4-deoxy-4-formamido-beta-L-arabinose from UDP-alpha-D-glucuronate: step 3/3. Its pathway is bacterial outer membrane biogenesis; lipopolysaccharide biosynthesis. Its function is as follows. Bifunctional enzyme that catalyzes the oxidative decarboxylation of UDP-glucuronic acid (UDP-GlcUA) to UDP-4-keto-arabinose (UDP-Ara4O) and the addition of a formyl group to UDP-4-amino-4-deoxy-L-arabinose (UDP-L-Ara4N) to form UDP-L-4-formamido-arabinose (UDP-L-Ara4FN). The modified arabinose is attached to lipid A and is required for resistance to polymyxin and cationic antimicrobial peptides. The sequence is that of Bifunctional polymyxin resistance protein ArnA from Salmonella paratyphi C (strain RKS4594).